The sequence spans 1044 residues: Eukaryotic translation initiation factor 3 subunit A (1044 aa).

Residues 92–121 (LKKFIELAEKKVTEAQAKADEIQSSLESAA) adopt a coiled-coil conformation. One can recognise a PCI domain in the interval 339–523 (MTKAASFVLL…GVLTFDTDIF (185 aa)). Residues 611 to 907 (IDKKKEAATD…EARRAARKAG (297 aa)) are a coiled coil. The span at 797–901 (SEKRHEEFEK…QREEEAEARR (105 aa)) shows a compositional bias: basic and acidic residues. The disordered stretch occupies residues 797-1044 (SEKRHEEFEK…WVPRWKQQQS (248 aa)). 2 stretches are compositionally biased toward low complexity: residues 943 to 956 (KEAA…AAPA) and 1006 to 1017 (SSSSQPPSRTQT).

This sequence belongs to the eIF-3 subunit A family. In terms of assembly, component of the eukaryotic translation initiation factor 3 (eIF-3) complex.

It is found in the cytoplasm. Functionally, RNA-binding component of the eukaryotic translation initiation factor 3 (eIF-3) complex, which is involved in protein synthesis of a specialized repertoire of mRNAs and, together with other initiation factors, stimulates binding of mRNA and methionyl-tRNAi to the 40S ribosome. The eIF-3 complex specifically targets and initiates translation of a subset of mRNAs involved in cell proliferation. This Aspergillus clavatus (strain ATCC 1007 / CBS 513.65 / DSM 816 / NCTC 3887 / NRRL 1 / QM 1276 / 107) protein is Eukaryotic translation initiation factor 3 subunit A (tif32).